The chain runs to 330 residues: Protein ANTHESIS POMOTING FACTOR 1 (330 aa).

6 WD repeats span residues 22 to 61 (DFGG…QLKI), 112 to 151 (GHKD…CQGI), 153 to 191 (HLRG…KGPF), 198 to 237 (GDTA…KKCG), 242 to 281 (PSQG…EVAR), and 284 to 323 (NNIG…APAD).

It belongs to the WD repeat SWD2 family. In terms of tissue distribution, expressed in the shoot apical meristem (SAM), embryos, seedlings, cotyledons, leaves primordia, young leaves and roots.

It is found in the nucleus. Its function is as follows. Component of a chromatin regulatory complex involved in regulating chromatin structure in the nucleus. Promotes flowering under long days (LD) via the regulation of bolting. This Arabidopsis thaliana (Mouse-ear cress) protein is Protein ANTHESIS POMOTING FACTOR 1.